Here is a 190-residue protein sequence, read N- to C-terminus: Vexin (190 aa).

The disordered stretch occupies residues 88-156; it reads AEKKASRFSR…DEATLPLTAH (69 aa). The span at 117–133 shows a compositional bias: polar residues; it reads TDKQNAPTVPASPSSYE. The span at 136–149 shows a compositional bias: basic and acidic residues; that stretch reads GCREQRPENPKDEA.

It belongs to the vexin family. As to expression, expressed in differentiating progenitors in the developing central nervous system (CNS).

It localises to the cell membrane. The protein resides in the nucleus. Required for neurogenesis in the neural plate and retina. Cooperates with cell cycle inhibitor cdknx/p27(xic1) to enhance neurogenesis and increase the levels of the neuronal determination factor neurog2/X-ngngr-1. This Xenopus laevis (African clawed frog) protein is Vexin.